The following is a 1690-amino-acid chain: Trinucleotide repeat-containing gene 6C protein (1690 aa).

3 stretches are compositionally biased toward polar residues: residues 1-12, 19-36, and 160-183; these read MATGSAQSSFPS, GSHGTNGALVQSPSNQSA, and AEPQTSTSQNVSFSVQPQNLNTDG. Disordered regions lie at residues 1 to 42, 158 to 202, 226 to 848, and 863 to 928; these read MATG…AGGT, ESAE…AMQT, PGAN…EPVV, and CKPA…TPGK. The tract at residues 1 to 921 is sufficient for interaction with argonaute family proteins; sequence MATGSAQSSF…GNTSKKGLQK (921 aa). Over residues 184–198 the composition is skewed to low complexity; the sequence is PNNTNPMNSSPNPIN. Positions 255-288 are enriched in polar residues; it reads NPATGSTNCGFSQGNGDTVNSALSAKQNGSSSAV. R313 is subject to Omega-N-methylarginine. Positions 362-374 are enriched in polar residues; it reads GWDSASAASQTPA. Positions 384 to 404 are enriched in low complexity; sequence SWAKATSSGTTASEGSSDGSG. Residues 415 to 426 show a composition bias toward basic and acidic residues; sequence GTGEGRRRDKGV. Over residues 444 to 459 the composition is skewed to polar residues; the sequence is LSNSGWGQTPVKQNTA. The segment covering 464-474 has biased composition (basic and acidic residues); it reads ESPRSERKNDN. S465 carries the post-translational modification Phosphoserine. Polar residues-rich tracts occupy residues 482 to 510, 519 to 530, 540 to 551, 644 to 656, and 663 to 678; these read IATQPSNSGGKTDGSIMNSTNTSSVSGWV, ANTSWGDSNNKA, SISSTAVNNAAA, GTNAKVNPGTNWG, and PQQNWAHKPQDNNVSN. S714 bears the Phosphoserine mark. Over residues 754-771 the composition is skewed to low complexity; that stretch reads SSTTAPATPTTPTSSSTT. T776 bears the Phosphothreonine mark. The segment covering 778 to 788 has biased composition (polar residues); the sequence is PSHQAGTQLNR. A compositionally biased stretch (low complexity) spans 901 to 915; it reads SQESSSSCSSWGNTS. The 46-residue stretch at 928–973 folds into the UBA domain; sequence KQDEAWIMSRLIKQLTDMGFPREPAEEALKSNSMNLDQAMSALLEK. S1006 carries the post-translational modification Phosphoserine. The stretch at 1156 to 1214 forms a coiled coil; the sequence is QLQLAYQRLQIQQQMLQAQRNVSGPMRQQEQQVARTITNLQQQIQQHQRQLAQALLVKQ. 5 disordered regions span residues 1212-1337, 1351-1380, 1397-1421, 1441-1486, and 1600-1625; these read VKQP…PPGK, QNSESPASPPVAVPHSWSRAKSDSDKISNG, GLQNIDPENDPDVTPGSVPTGPTIN, IKST…PSST, and PPTSSWQSSSGGSQPRLGTSGSTHGL. A compositionally biased stretch (pro residues) spans 1214–1223; sequence QPPPPPPPPH. The tract at residues 1260 to 1690 is silencing domain; interaction with CNOT1 and PAN3; that stretch reads NTFAPYPLAG…PGDLLSGESI (431 aa). Residues 1272–1321 are compositionally biased toward polar residues; that stretch reads PNMNVNSIDMSSGLSVKDPSQSQSRLPQWTHPNSMGNLSSAASPLDQNPS. The segment at 1371–1417 is required for interaction with PABPC1; the sequence is KSDSDKISNGSSISWPPEFHPGVPWKGLQNIDPENDPDVTPGSVPTG. Positions 1371–1690 are sufficient for translational repression when tethered to a target mRNA; sequence KSDSDKISNG…PGDLLSGESI (320 aa). A PABPC1-interacting motif-2 (PAM2) region spans residues 1381-1399; that stretch reads SSISWPPEFHPGVPWKGLQ. Residues 1441-1457 are compositionally biased toward polar residues; that stretch reads IKSTWSSGPASHTQASL. In terms of domain architecture, RRM spans 1565–1632; sequence AQKSLHMCVL…HGLVRSDTAH (68 aa). An interaction with the CCR4-NOT complex region spans residues 1596-1690; the sequence is GQALPPTSSW…PGDLLSGESI (95 aa). Over residues 1603 to 1613 the composition is skewed to low complexity; the sequence is SSWQSSSGGSQ.

This sequence belongs to the GW182 family. Interacts with one or more of the argonaute family proteins AGO1, AGO2, AGO3 and AGO4. Interacts with CNOT1; the interaction mediates the association with the CCR4-NOT complex. Interacts with PAN3; the interaction mediates the association with the PAN complex.

Its function is as follows. Plays a role in RNA-mediated gene silencing by micro-RNAs (miRNAs). Required for miRNA-dependent translational repression of complementary mRNAs by argonaute family proteins As scaffoldng protein associates with argonaute proteins bound to partially complementary mRNAs and simultaneously can recruit CCR4-NOT and PAN deadenylase complexes. This Mus musculus (Mouse) protein is Trinucleotide repeat-containing gene 6C protein (Tnrc6c).